Reading from the N-terminus, the 219-residue chain is UPF0502 protein GSU0233 (219 aa).

This sequence belongs to the UPF0502 family.

This is UPF0502 protein GSU0233 from Geobacter sulfurreducens (strain ATCC 51573 / DSM 12127 / PCA).